The primary structure comprises 109 residues: Iron-sulfur cluster assembly protein CyaY (109 aa).

It belongs to the frataxin family.

In terms of biological role, involved in iron-sulfur (Fe-S) cluster assembly. May act as a regulator of Fe-S biogenesis. This chain is Iron-sulfur cluster assembly protein CyaY, found in Bordetella petrii (strain ATCC BAA-461 / DSM 12804 / CCUG 43448).